The chain runs to 178 residues: Alkyl hydroperoxide reductase AhpD (178 aa).

C131 serves as the catalytic Proton donor. Cysteines 131 and 134 form a disulfide. The Cysteine sulfenic acid (-SOH) intermediate role is filled by C134.

Belongs to the AhpD family.

The enzyme catalyses N(6)-[(R)-dihydrolipoyl]-L-lysyl-[lipoyl-carrier protein] + a hydroperoxide = N(6)-[(R)-lipoyl]-L-lysyl-[lipoyl-carrier protein] + an alcohol + H2O. Antioxidant protein with alkyl hydroperoxidase activity. Required for the reduction of the AhpC active site cysteine residues and for the regeneration of the AhpC enzyme activity. This chain is Alkyl hydroperoxide reductase AhpD, found in Methylocella silvestris (strain DSM 15510 / CIP 108128 / LMG 27833 / NCIMB 13906 / BL2).